Here is a 276-residue protein sequence, read N- to C-terminus: Adenylate kinase (276 aa).

An ATP-binding site is contributed by 52-57 (GAGKGT). The tract at residues 72 to 101 (ATGDMLRAQVAAKTPLGREAKKIMDAGGLV) is NMP. AMP-binding positions include Thr-73, Arg-78, 99-101 (GLV), 128-131 (GFPR), and Gln-135. The LID stretch occupies residues 169–206 (GRLVHPASGRSYHKIFNPPKAPMTDDVTGEPLIQRSDD). ATP contacts are provided by residues Arg-170 and 179–180 (SY). AMP contacts are provided by Arg-203 and Arg-214. Gln-242 serves as a coordination point for ATP.

It belongs to the adenylate kinase family. AK2 subfamily. In terms of assembly, monomer.

It localises to the cytoplasm. It is found in the cytosol. The protein localises to the mitochondrion intermembrane space. It carries out the reaction AMP + ATP = 2 ADP. Functionally, catalyzes the reversible transfer of the terminal phosphate group between ATP and AMP. Plays an important role in cellular energy homeostasis and in adenine nucleotide metabolism. Adenylate kinase activity is critical for regulation of the phosphate utilization and the AMP de novo biosynthesis pathways. The protein is Adenylate kinase (adk1) of Pyrenophora tritici-repentis (strain Pt-1C-BFP) (Wheat tan spot fungus).